Here is a 363-residue protein sequence, read N- to C-terminus: MQGANLKVLPSTRAAAKELVDPLDITNVGWSTLEPKFDELMQLMDAPSSGINALAARSAHREKVGAVIEQLLTRAQDESRRLLVEGNGEAAAEAGVKTLRLKERFYGKGSVKLVPAHFHLARTNQFLKRYGNAEEILSLAHFIILQNPDEADATIKAELHQTFGLLYAADNKLDVSVKHLTCATYYLSVMNGPEHVLTTFAYFDLANVFATKACMEAAMALYDTVKNIWLKHLRRVLKDIVDETMAAKLVKRYDDDEVTHEVGHASARAFGKENLADVSKMLFGIFSIQKERLTISHPTTARAQFLLGLYLLWVNKNDEAAEHLLSARTTSQKFYGERHPIVQDIEDWCIWFEIPFRGVAAEQ.

The segment at 129 to 363 (RYGNAEEILS…IPFRGVAAEQ (235 aa)) is required for localization to the flagellum and for flagellar motility. TPR repeat units lie at residues 157–190 (AELH…LSVM) and 199–232 (TFAY…WLKH).

Interacts with TTC29.

Its subcellular location is the cytoplasm. It localises to the cytoskeleton. It is found in the flagellum axoneme. In terms of biological role, required for flagellum motility. The sequence is that of Protein TAX-1 from Trypanosoma brucei brucei (strain 927/4 GUTat10.1).